The following is a 182-amino-acid chain: Ribosome maturation factor RimM (182 aa).

One can recognise a PRC barrel domain in the interval 106–179; it reads EGEFHVLDLI…RIEITPPPGL (74 aa).

This sequence belongs to the RimM family. In terms of assembly, binds ribosomal protein uS19.

It is found in the cytoplasm. An accessory protein needed during the final step in the assembly of 30S ribosomal subunit, possibly for assembly of the head region. Essential for efficient processing of 16S rRNA. May be needed both before and after RbfA during the maturation of 16S rRNA. It has affinity for free ribosomal 30S subunits but not for 70S ribosomes. This is Ribosome maturation factor RimM from Synechococcus elongatus (strain ATCC 33912 / PCC 7942 / FACHB-805) (Anacystis nidulans R2).